We begin with the raw amino-acid sequence, 160 residues long: SsrA-binding protein (160 aa).

Belongs to the SmpB family.

The protein localises to the cytoplasm. Its function is as follows. Required for rescue of stalled ribosomes mediated by trans-translation. Binds to transfer-messenger RNA (tmRNA), required for stable association of tmRNA with ribosomes. tmRNA and SmpB together mimic tRNA shape, replacing the anticodon stem-loop with SmpB. tmRNA is encoded by the ssrA gene; the 2 termini fold to resemble tRNA(Ala) and it encodes a 'tag peptide', a short internal open reading frame. During trans-translation Ala-aminoacylated tmRNA acts like a tRNA, entering the A-site of stalled ribosomes, displacing the stalled mRNA. The ribosome then switches to translate the ORF on the tmRNA; the nascent peptide is terminated with the 'tag peptide' encoded by the tmRNA and targeted for degradation. The ribosome is freed to recommence translation, which seems to be the essential function of trans-translation. The chain is SsrA-binding protein from Citrobacter koseri (strain ATCC BAA-895 / CDC 4225-83 / SGSC4696).